A 907-amino-acid polypeptide reads, in one-letter code: Androgen receptor (907 aa).

The tract at residues 1 to 545 (MEVQLGLGRV…PIDYYFPPQK (545 aa)) is modulating. Residues 1-574 (MEVQLGLGRV…GSCKVFFKRA (574 aa)) form an interaction with ZNF318 region. Disordered regions lie at residues 36 to 152 (NPGP…LSLL) and 200 to 231 (QQQEVVSEGSSSGRAREAAGASTSSKDSYLGG). Residues 55–76 (QQQQQQQQQQETSPRQQQQQQQ) show a composition bias toward low complexity. Ser67 bears the Phosphoserine; by CDK9 mark. Ser81 carries the phosphoserine modification. Over residues 123–134 (TSATGKGLQQQQ) the composition is skewed to polar residues. Low complexity predominate over residues 200–224 (QQQEVVSEGSSSGRAREAAGASTSS). Phosphotyrosine; by CSK is present on Tyr228. Ser261 bears the Phosphoserine mark. Tyr272 carries the phosphotyrosine; by CSK and TNK2 modification. A phosphotyrosine; by CSK mark is found at Tyr310, Tyr349, Tyr360, and Tyr365. Tyr366 carries the phosphotyrosine; by CSK and TNK2 modification. Lys389 participates in a covalent cross-link: Glycyl lysine isopeptide (Lys-Gly) (interchain with G-Cter in SUMO). Tyr396 is subject to Phosphotyrosine; by CSK. Lys508 participates in a covalent cross-link: Glycyl lysine isopeptide (Lys-Gly) (interchain with G-Cter in SUMO). 2 positions are modified to phosphotyrosine; by CSK: Tyr522 and Tyr539. Residues 539-906 (YYFPPQKTCL…GKVKPIYFHT (368 aa)) form an interaction with LPXN region. Residues 546–619 (TCLICGDEAS…AGMTLGARKL (74 aa)) constitute a DNA-binding region (nuclear receptor). NR C4-type zinc fingers lie at residues 547–567 (CLICGDEASGCHYGALTCGSC) and 583–607 (CASRNDCTIDKFRRKNCPSCRLRKC). Residues 559 to 649 (YGALTCGSCK…TEEPTQKLTV (91 aa)) form an interaction with HIPK3 region. The interaction with CCAR1 stretch occupies residues 579-906 (QKYLCASRND…GKVKPIYFHT (328 aa)). An interaction with KAT7 region spans residues 612–906 (MTLGARKLKK…GKVKPIYFHT (295 aa)). Ser638 carries the post-translational modification Phosphoserine; by STK4/MST1. The 232-residue stretch at 656-887 (ECQPIFLNVL…DFPEMMAEII (232 aa)) folds into the NR LBD domain. Residues Asn693 and Arg740 each contribute to the 17beta-hydroxy-5alpha-androstan-3-one site. Glycyl lysine isopeptide (Lys-Gly) (interchain with G-Cter in ubiquitin) cross-links involve residues Lys833 and Lys835. Residue Thr865 participates in 17beta-hydroxy-5alpha-androstan-3-one binding. A Phosphotyrosine; by CSK modification is found at Tyr903.

It belongs to the nuclear hormone receptor family. NR3 subfamily. As to quaternary structure, binds DNA as a homodimer. Part of a ternary complex containing AR, EFCAB6/DJBP and PARK7. Interacts with HIPK3 and NR0B2 in the presence of androgen. The ligand binding domain interacts with KAT7/HBO1 in the presence of dihydrotestosterone. Interacts with EFCAB6/DJBP, PQBP1, RANBP9, RBAK, SPDEF, SRA1, TGFB1I1 and RREB1. Interacts with ZMIZ1/ZIMP10 and ZMIZ2/ZMIP7 which both enhance its transactivation activity. Interacts with SLC30A9 and RAD54L2/ARIP4. Interacts with MACROD1 (via macro domain). Interacts via the ligand-binding domain with LXXLL and FXXLF motifs from NCOA1, NCOA2, NCOA3 and MAGEA11. Interacts (via nuclear receptor DNA binding domain and nuclear receptor ligand binding domain) with NCOA4. The AR N-terminal poly-Gln region binds Ran resulting in enhancement of AR-mediated transactivation. Ran-binding decreases as the poly-Gln length increases. Interacts with HIP1 (via coiled coil domain). Interacts (via ligand-binding domain) with TRIM68. Interacts with TNK2. Interacts with USP26. Interacts with RNF6. Interacts (regulated by RNF6 probably through polyubiquitination) with RNF14; regulates AR transcriptional activity. Interacts with PRMT2 and TRIM24. Interacts with RACK1. Interacts with RANBP10; this interaction enhances dihydrotestosterone-induced AR transcriptional activity. Interacts with PRPF6 in a hormone-independent way; this interaction enhances dihydrotestosterone-induced AR transcriptional activity. Interacts with STK4/MST1. Interacts with ZIPK/DAPK3. Interacts with LPXN. Interacts with MAK. Part of a complex containing AR, MAK and NCOA3. Interacts with CRY1. Interacts with CCAR1 and GATA2. Interacts with ZNF318. Interacts with BUD31. Interacts with ARID4A. Interacts with ARID4B. Interacts (via NR LBD domain) with ZBTB7A; the interaction is direct and androgen-dependent. Interacts with NCOR1. Interacts with NCOR2. Interacts witH CRY2 in a ligand-dependent manner. Post-translationally, phosphorylated in prostate cancer cells in response to several growth factors including EGF. Phosphorylation is induced by c-Src kinase (CSK). Tyr-522 is one of the major phosphorylation sites and an increase in phosphorylation and Src kinase activity is associated with prostate cancer progression. Phosphorylation by TNK2 enhances the DNA-binding and transcriptional activity. Phosphorylation at Ser-67 by CDK9 regulates AR promoter selectivity and cell growth. In terms of processing, sumoylated on Lys-389 (major) and Lys-508. Ubiquitinated. Deubiquitinated by USP26. 'Lys-6' and 'Lys-27'-linked polyubiquitination by RNF6 modulates AR transcriptional activity and specificity. Palmitoylated by ZDHHC7 and ZDHHC21. Palmitoylation is required for plasma membrane targeting and for rapid intracellular signaling via ERK and AKT kinases and cAMP generation.

It is found in the nucleus. Its subcellular location is the cytoplasm. Functionally, steroid hormone receptors are ligand-activated transcription factors that regulate eukaryotic gene expression and affect cellular proliferation and differentiation in target tissues. Transcription factor activity is modulated by bound coactivator and corepressor proteins like ZBTB7A that recruits NCOR1 and NCOR2 to the androgen response elements/ARE on target genes, negatively regulating androgen receptor signaling and androgen-induced cell proliferation. Transcription activation is also down-regulated by NR0B2. Activated, but not phosphorylated, by HIPK3 and ZIPK/DAPK3. The polypeptide is Androgen receptor (AR) (Canis lupus familiaris (Dog)).